Consider the following 155-residue polypeptide: Protein Smg homolog (155 aa).

This sequence belongs to the Smg family.

In Methylococcus capsulatus (strain ATCC 33009 / NCIMB 11132 / Bath), this protein is Protein Smg homolog.